We begin with the raw amino-acid sequence, 440 residues long: Ribulose bisphosphate carboxylase large chain (440 aa).

Residue K4 is modified to N6,N6,N6-trimethyllysine. Substrate is bound by residues N113 and T163. K165 (proton acceptor) is an active-site residue. A substrate-binding site is contributed by K167. Mg(2+) is bound by residues K191, D193, and E194. An N6-carboxylysine modification is found at K191. The Proton acceptor role is filled by H284. Residues R285, H317, and S369 each contribute to the substrate site.

Belongs to the RuBisCO large chain family. Type I subfamily. Heterohexadecamer of 8 large chains and 8 small chains; disulfide-linked. The disulfide link is formed within the large subunit homodimers. Requires Mg(2+) as cofactor. The disulfide bond which can form in the large chain dimeric partners within the hexadecamer appears to be associated with oxidative stress and protein turnover.

It is found in the plastid. The protein localises to the chloroplast. It carries out the reaction 2 (2R)-3-phosphoglycerate + 2 H(+) = D-ribulose 1,5-bisphosphate + CO2 + H2O. It catalyses the reaction D-ribulose 1,5-bisphosphate + O2 = 2-phosphoglycolate + (2R)-3-phosphoglycerate + 2 H(+). RuBisCO catalyzes two reactions: the carboxylation of D-ribulose 1,5-bisphosphate, the primary event in carbon dioxide fixation, as well as the oxidative fragmentation of the pentose substrate in the photorespiration process. Both reactions occur simultaneously and in competition at the same active site. The sequence is that of Ribulose bisphosphate carboxylase large chain from Matteuccia struthiopteris (European ostrich fern).